The following is a 1136-amino-acid chain: Phytochrome (1136 aa).

The tract at residues 1–28 (MSTTRPRAATHSASSGSVSRSSKHSARV) is disordered. The span at 11–20 (HSASSGSVSR) shows a compositional bias: low complexity. Positions 231 to 414 (DIRLLCDTVV…VFGIQLNKEV (184 aa)) constitute a GAF domain. Cys-336 serves as a coordination point for phytochromobilin. PAS domains are found at residues 629–699 (VTNE…LQGE) and 762–833 (DYRA…TKLR). The 220-residue stretch at 913–1132 (YIRQEIRNPL…IINVEFPLAQ (220 aa)) folds into the Histidine kinase domain.

The protein belongs to the phytochrome family. Homodimer. Contains one covalently linked phytochromobilin chromophore.

Regulatory photoreceptor which exists in two forms that are reversibly interconvertible by light: the Pr form that absorbs maximally in the red region of the spectrum and the Pfr form that absorbs maximally in the far-red region. Photoconversion of Pr to Pfr induces an array of morphogenic responses, whereas reconversion of Pfr to Pr cancels the induction of those responses. Pfr controls the expression of a number of nuclear genes including those encoding the small subunit of ribulose-bisphosphate carboxylase, chlorophyll A/B binding protein, protochlorophyllide reductase, rRNA, etc. It also controls the expression of its own gene(s) in a negative feedback fashion. In Picea abies (Norway spruce), this protein is Phytochrome.